The primary structure comprises 62 residues: Large ribosomal subunit protein uL29 (62 aa).

The protein belongs to the universal ribosomal protein uL29 family.

This Desulfosudis oleivorans (strain DSM 6200 / JCM 39069 / Hxd3) (Desulfococcus oleovorans) protein is Large ribosomal subunit protein uL29.